Here is a 202-residue protein sequence, read N- to C-terminus: NADH:(hydroxy)cinnamate reductase subunit CrdA (202 aa).

Belongs to the NADH-dependent flavin reductase family. As to quaternary structure, NADH:(hydroxy)cinnamate reductase Crd is a heterodimer composed of CrdA and CrdB subunits, encoded by adjacent genes. The cofactor is FMN.

In terms of biological role, component of the NADH:(hydroxy)cinnamate reductase. CrdA is probably reduced by NADH and then transfers the electrons to the catalytic center of CrdB. Is likely involved in protecting V.ruber from (hydroxy)cinnamate poisoning. The sequence is that of NADH:(hydroxy)cinnamate reductase subunit CrdA from Vibrio ruber (strain DSM 16370 / JCM 11486 / BCRC 17186 / CECT 7878 / LMG 23124 / VR1).